The sequence spans 521 residues: Cholesterol side-chain cleavage enzyme, mitochondrial (521 aa).

The N-terminal 39 residues, 1 to 39 (MLAKGLPPRSVLVKGCQTFLSAPREGLGRLRVPTGEGAG), are a transit peptide targeting the mitochondrion. Position 462 (Cys462) interacts with heme.

The protein belongs to the cytochrome P450 family. In terms of assembly, interacts with FDX1/adrenodoxin. Heme is required as a cofactor.

The protein localises to the mitochondrion inner membrane. The catalysed reaction is 6 reduced [adrenodoxin] + cholesterol + 3 O2 + 6 H(+) = 4-methylpentanal + pregnenolone + 6 oxidized [adrenodoxin] + 4 H2O. The enzyme catalyses 2 reduced [adrenodoxin] + cholesterol + O2 + 2 H(+) = (22R)-hydroxycholesterol + 2 oxidized [adrenodoxin] + H2O. It carries out the reaction (22R)-hydroxycholesterol + 2 reduced [adrenodoxin] + O2 + 2 H(+) = (20R,22R)-20,22-dihydroxycholesterol + 2 oxidized [adrenodoxin] + H2O. It catalyses the reaction (20R,22R)-20,22-dihydroxycholesterol + 2 reduced [adrenodoxin] + O2 + 2 H(+) = 4-methylpentanal + pregnenolone + 2 oxidized [adrenodoxin] + 2 H2O. It functions in the pathway lipid metabolism; C21-steroid hormone metabolism. It participates in steroid metabolism; cholesterol metabolism. A cytochrome P450 monooxygenase that catalyzes the side-chain hydroxylation and cleavage of cholesterol to pregnenolone, the precursor of most steroid hormones. Catalyzes three sequential oxidation reactions of cholesterol, namely the hydroxylation at C22 followed with the hydroxylation at C20 to yield 20R,22R-hydroxycholesterol that is further cleaved between C20 and C22 to yield the C21-steroid pregnenolone and 4-methylpentanal. Mechanistically, uses molecular oxygen inserting one oxygen atom into a substrate and reducing the second into a water molecule. Two electrons are provided by NADPH via a two-protein mitochondrial transfer system comprising flavoprotein FDXR (adrenodoxin/ferredoxin reductase) and nonheme iron-sulfur protein FDX1 or FDX2 (adrenodoxin/ferredoxin). This chain is Cholesterol side-chain cleavage enzyme, mitochondrial, found in Homo sapiens (Human).